Reading from the N-terminus, the 221-residue chain is Ribosomal RNA large subunit methyltransferase E (221 aa).

Residues Gly60, Trp62, Asp89, Asp105, and Asp134 each coordinate S-adenosyl-L-methionine. Lys174 acts as the Proton acceptor in catalysis.

It belongs to the class I-like SAM-binding methyltransferase superfamily. RNA methyltransferase RlmE family.

It is found in the cytoplasm. The catalysed reaction is uridine(2552) in 23S rRNA + S-adenosyl-L-methionine = 2'-O-methyluridine(2552) in 23S rRNA + S-adenosyl-L-homocysteine + H(+). Specifically methylates the uridine in position 2552 of 23S rRNA at the 2'-O position of the ribose in the fully assembled 50S ribosomal subunit. This is Ribosomal RNA large subunit methyltransferase E from Cupriavidus necator (strain ATCC 17699 / DSM 428 / KCTC 22496 / NCIMB 10442 / H16 / Stanier 337) (Ralstonia eutropha).